The following is a 116-amino-acid chain: Non-specific lipid-transfer protein AP10 (116 aa).

The N-terminal stretch at Met1–Ala26 is a signal peptide. Cystine bridges form between Cys29-Cys76, Cys39-Cys53, Cys54-Cys98, and Cys74-Cys112.

The protein belongs to the plant LTP family. As to expression, in germinating seeds, detected in the entire surface of the cotyledons, shoot meristem, inter-cotyledon space, primary xylem and immature vascular elements (at protein level). Expressed in seeds, but not the aerial parts of the plant.

It is found in the secreted. It localises to the extracellular space. The protein localises to the membrane. In terms of biological role, plant non-specific lipid-transfer proteins transfer phospholipids as well as galactolipids across membranes. May play a role in wax or cutin deposition in the cell walls of expanding epidermal cells and certain secretory tissues. Permeabilizes the membrane of fungal spores, inhibits germination of the spores of the fungus F.solani at a concentration of 40 ug/ml. Inhibits the growth of F.solani with an IC(50) of 6.5 ug/ml, weakly inhibits the growth of the fungus A.alternata. Binds oleoyl-CoA. The protein is Non-specific lipid-transfer protein AP10 of Helianthus annuus (Common sunflower).